An 86-amino-acid chain; its full sequence is Neuropeptide-like 3 (86 aa).

The first 16 residues, 1 to 16, serve as a signal peptide directing secretion; it reads MFKLCVFVALLSLAAA. 2 propeptides span residues 17–50 and 63–75; these read APAP…VAPQ and AITQ…LLIK. At Ile-85 the chain carries Isoleucine amide.

It localises to the secreted. This Drosophila yakuba (Fruit fly) protein is Neuropeptide-like 3 (Nplp3).